The chain runs to 370 residues: MKFNELYIGVMSGTSMDGVDTALVEITDNHVRLIAHGDYPMPAAMKEMLLSVCTGQATNLKAIGELDHQLGHLFADAVLQLLNKSGYVAEQIRAIGNHGQTVFHQPTGDLPFTTQLGDANIIAVKTGIDTVADFRRKDMALGGQGAPLVPAFHKSIFAMQDSTTVVLNIGGIANISVLHPQQPVHGYDTGPGNMLMDAWCERHTGHGFDKDAQLALRGSVNEALLAHLLKEPYLAMSAPKSTGRELFNMDWLHHQLANYDVSVEDVQRTLCEYTAITIAHDVTKFTYGETPQLLVCGGGARNPLLMQRLAELLPQWHVTTTTDKGVDGDYMEAMAFAWLAQRHIHDLPSNLPEVTGASRLASLGVLYSKN.

13-20 (GTSMDGVD) serves as a coordination point for ATP.

This sequence belongs to the anhydro-N-acetylmuramic acid kinase family.

The enzyme catalyses 1,6-anhydro-N-acetyl-beta-muramate + ATP + H2O = N-acetyl-D-muramate 6-phosphate + ADP + H(+). The protein operates within amino-sugar metabolism; 1,6-anhydro-N-acetylmuramate degradation. It participates in cell wall biogenesis; peptidoglycan recycling. Catalyzes the specific phosphorylation of 1,6-anhydro-N-acetylmuramic acid (anhMurNAc) with the simultaneous cleavage of the 1,6-anhydro ring, generating MurNAc-6-P. Is required for the utilization of anhMurNAc either imported from the medium or derived from its own cell wall murein, and thus plays a role in cell wall recycling. This is Anhydro-N-acetylmuramic acid kinase from Vibrio parahaemolyticus serotype O3:K6 (strain RIMD 2210633).